The sequence spans 686 residues: Ovotransferrin (686 aa).

Transferrin-like domains follow at residues 7–333 and 345–670; these read VRWC…SLRK and IQWC…SLNT. 6 cysteine pairs are disulfide-bonded: C10/C45, C20/C36, C115/C197, C160/C174, C171/C182, and C228/C242. Residues 333 to 341 are connecting region; it reads KDQLTVGPR. 9 cysteine pairs are disulfide-bonded: C348–C380, C358–C371, C405–C680, C421–C643, C454–C530, C478–C671, C488–C502, C499–C513, and C570–C584. N473 is a glycosylation site (N-linked (GlcNAc...) asparagine). N548 carries an N-linked (GlcNAc...) asparagine glycan.

It belongs to the transferrin family. As to quaternary structure, monomer.

It is found in the secreted. Functionally, transferrins are iron binding transport proteins which can bind two Fe(3+) ions in association with the binding of an anion, usually bicarbonate. It is responsible for the transport of iron from sites of absorption and heme degradation to those of storage and utilization. Serum transferrin may also have a further role in stimulating cell proliferation. Ovotransferrin has a bacteriostatic function. Its concentration in avian egg is the highest concentration of any transferrin in vivo. This chain is Ovotransferrin, found in Anas platyrhynchos (Mallard).